A 188-amino-acid chain; its full sequence is Large ribosomal subunit protein eL18 (188 aa).

The tract at residues 147-188 (EANKHFGPAPGVPHSHTKAHVRSKGRQFERARGRRTSKGYKK) is disordered. 2 stretches are compositionally biased toward basic residues: residues 161 to 171 (SHTKAHVRSKG) and 178 to 188 (RGRRTSKGYKK).

Belongs to the eukaryotic ribosomal protein eL18 family.

It localises to the cytoplasm. The protein is Large ribosomal subunit protein eL18 (RpL18) of Diaphorina citri (Asian citrus psyllid).